The following is a 186-amino-acid chain: uncharacterized protein (186 aa).

In terms of domain architecture, Cupin type-2 spans 89 to 164; the sequence is LMSLGIGEDI…NTPLKLYSIY (76 aa). Residue 117–124 participates in ATP binding; sequence GIVKMGKS.

This is an uncharacterized protein from Bacillus subtilis (strain 168).